Reading from the N-terminus, the 335-residue chain is Glycerol-3-phosphate dehydrogenase [NAD(P)+] (335 aa).

NADPH-binding residues include W15, R36, and K109. 3 residues coordinate sn-glycerol 3-phosphate: K109, G137, and S139. An NADPH-binding site is contributed by A141. Residues K192, D245, S255, R256, and N257 each coordinate sn-glycerol 3-phosphate. The Proton acceptor role is filled by K192. R256 contributes to the NADPH binding site. NADPH is bound by residues L279 and E281.

Belongs to the NAD-dependent glycerol-3-phosphate dehydrogenase family.

It localises to the cytoplasm. It carries out the reaction sn-glycerol 3-phosphate + NAD(+) = dihydroxyacetone phosphate + NADH + H(+). The enzyme catalyses sn-glycerol 3-phosphate + NADP(+) = dihydroxyacetone phosphate + NADPH + H(+). It functions in the pathway membrane lipid metabolism; glycerophospholipid metabolism. Functionally, catalyzes the reduction of the glycolytic intermediate dihydroxyacetone phosphate (DHAP) to sn-glycerol 3-phosphate (G3P), the key precursor for phospholipid synthesis. The protein is Glycerol-3-phosphate dehydrogenase [NAD(P)+] of Beijerinckia indica subsp. indica (strain ATCC 9039 / DSM 1715 / NCIMB 8712).